A 169-amino-acid polypeptide reads, in one-letter code: Cell division inhibitor SulA (169 aa).

Residues 106–112 form a ftsZ binding region; that stretch reads ALRTGNY. Residues 162-169 form a lon protease binding region; sequence KIHSNLYH.

The protein belongs to the SulA family. Interacts with FtsZ. In terms of processing, is rapidly cleaved and degraded by the Lon protease once DNA damage is repaired.

In terms of biological role, component of the SOS system and an inhibitor of cell division. Accumulation of SulA causes rapid cessation of cell division and the appearance of long, non-septate filaments. In the presence of GTP, binds a polymerization-competent form of FtsZ in a 1:1 ratio, thus inhibiting FtsZ polymerization and therefore preventing it from participating in the assembly of the Z ring. This mechanism prevents the premature segregation of damaged DNA to daughter cells during cell division. This is Cell division inhibitor SulA from Salmonella arizonae (strain ATCC BAA-731 / CDC346-86 / RSK2980).